A 285-amino-acid chain; its full sequence is Polyamine aminopropyltransferase (285 aa).

The region spanning 5 to 241 (DNWYIEHFQP…GWWSVTMASK (237 aa)) is the PABS domain. Gln-35 contacts S-methyl-5'-thioadenosine. The spermidine site is built by His-66 and Asp-90. S-methyl-5'-thioadenosine-binding positions include Asp-110 and 141–142 (DG). Asp-160 functions as the Proton acceptor in the catalytic mechanism. 160–163 (DSTD) serves as a coordination point for spermidine. Pro-167 contacts S-methyl-5'-thioadenosine.

It belongs to the spermidine/spermine synthase family. Homodimer or homotetramer.

It localises to the cytoplasm. The catalysed reaction is S-adenosyl 3-(methylsulfanyl)propylamine + putrescine = S-methyl-5'-thioadenosine + spermidine + H(+). It functions in the pathway amine and polyamine biosynthesis; spermidine biosynthesis; spermidine from putrescine: step 1/1. In terms of biological role, catalyzes the irreversible transfer of a propylamine group from the amino donor S-adenosylmethioninamine (decarboxy-AdoMet) to putrescine (1,4-diaminobutane) to yield spermidine. The polypeptide is Polyamine aminopropyltransferase (Xanthomonas axonopodis pv. citri (strain 306)).